The sequence spans 179 residues: Peptide methionine sulfoxide reductase MsrA (179 aa).

Residue Cys14 is part of the active site.

This sequence belongs to the MsrA Met sulfoxide reductase family.

It carries out the reaction L-methionyl-[protein] + [thioredoxin]-disulfide + H2O = L-methionyl-(S)-S-oxide-[protein] + [thioredoxin]-dithiol. The enzyme catalyses [thioredoxin]-disulfide + L-methionine + H2O = L-methionine (S)-S-oxide + [thioredoxin]-dithiol. Its function is as follows. Has an important function as a repair enzyme for proteins that have been inactivated by oxidation. Catalyzes the reversible oxidation-reduction of methionine sulfoxide in proteins to methionine. The chain is Peptide methionine sulfoxide reductase MsrA from Nitrobacter winogradskyi (strain ATCC 25391 / DSM 10237 / CIP 104748 / NCIMB 11846 / Nb-255).